A 246-amino-acid chain; its full sequence is Pyridoxine 5'-phosphate synthase (246 aa).

Asn-7 is a binding site for 3-amino-2-oxopropyl phosphate. 9-10 (DH) contributes to the 1-deoxy-D-xylulose 5-phosphate binding site. Arg-18 is a 3-amino-2-oxopropyl phosphate binding site. His-43 serves as the catalytic Proton acceptor. Residues Arg-45 and His-50 each coordinate 1-deoxy-D-xylulose 5-phosphate. The active-site Proton acceptor is the Glu-70. Thr-100 provides a ligand contact to 1-deoxy-D-xylulose 5-phosphate. His-190 (proton donor) is an active-site residue. Residues Gly-191 and 212-213 (GH) each bind 3-amino-2-oxopropyl phosphate.

It belongs to the PNP synthase family. Homooctamer; tetramer of dimers.

Its subcellular location is the cytoplasm. It catalyses the reaction 3-amino-2-oxopropyl phosphate + 1-deoxy-D-xylulose 5-phosphate = pyridoxine 5'-phosphate + phosphate + 2 H2O + H(+). It functions in the pathway cofactor biosynthesis; pyridoxine 5'-phosphate biosynthesis; pyridoxine 5'-phosphate from D-erythrose 4-phosphate: step 5/5. In terms of biological role, catalyzes the complicated ring closure reaction between the two acyclic compounds 1-deoxy-D-xylulose-5-phosphate (DXP) and 3-amino-2-oxopropyl phosphate (1-amino-acetone-3-phosphate or AAP) to form pyridoxine 5'-phosphate (PNP) and inorganic phosphate. In Prochlorococcus marinus (strain SARG / CCMP1375 / SS120), this protein is Pyridoxine 5'-phosphate synthase.